The following is a 1959-amino-acid chain: Sodium channel protein type 10 subunit alpha (1959 aa).

Over 1-125 (MEFPIGSVGT…FNLIRRTAIK (125 aa)) the chain is Cytoplasmic. Residues 30–53 (AHGAAKKARAKHGERKGQDEKPRP) form a disordered region. The segment covering 33 to 43 (AAKKARAKHGE) has biased composition (basic residues). Over residues 44 to 53 (RKGQDEKPRP) the composition is skewed to basic and acidic residues. One copy of the I repeat lies at 116 to 404 (FNLIRRTAIK…VTMAYEEQNQ (289 aa)). A helical membrane pass occupies residues 126-149 (VSVHAWFSIFITITILFNCVCMTQ). The Extracellular portion of the chain corresponds to 150–154 (NDLPE). The helical transmembrane segment at 155–174 (KIEYAFTVIYTFEALIKILA) threads the bilayer. At 175–187 (RGFCLNEFTYLRD) the chain is on the cytoplasmic side. A helical transmembrane segment spans residues 188 to 206 (PWNWLDFSVITLAYVGAAI). Topologically, residues 207-212 (DLRGIS) are extracellular. Residues 213-232 (GLRTFRVLRALKTVSVIPGL) traverse the membrane as a helical; Voltage-sensor segment. Residues 233-248 (KVIVGALIHSVRKLAD) lie on the Cytoplasmic side of the membrane. Residues 249-272 (VTILTVFCLSVFALVGLQLFKGNL) traverse the membrane as a helical segment. Over 273–340 (KNKCIKRSTD…PDFNYTSFDS (68 aa)) the chain is Extracellular. Cysteines 276 and 318 form a disulfide. Asn-288, Asn-311, and Asn-334 each carry an N-linked (GlcNAc...) asparagine glycan. Positions 341–365 (FAWAFLSLFRLMTQDSWERLYQQTL) form an intramembrane region, pore-forming. Topologically, residues 366-372 (RASGKMY) are extracellular. The chain crosses the membrane as a helical span at residues 373–398 (MVFFVLVIFLGSFYLVNLILAVVTMA). Over 399–659 (YEEQNQATIA…KWMKFKMVLF (261 aa)) the chain is Cytoplasmic. Phosphoserine is present on residues Ser-440, Ser-443, Ser-466, and Ser-478. Disordered regions lie at residues 442 to 484 (HSHN…YNQR) and 510 to 578 (SQDV…ELTT). The span at 475-484 (SPQSDPYNQR) shows a compositional bias: polar residues. The segment covering 523 to 533 (GVFHGDHESHR) has biased composition (basic and acidic residues). Phosphoserine occurs at positions 612 and 615. One copy of the II repeat lies at 647-911 (CCPKWMKFKM…EDDGEVNNLQ (265 aa)). The chain crosses the membrane as a helical span at residues 660 to 684 (ELVTDPFAELTITLCIVVNTIFMAM). The Extracellular portion of the chain corresponds to 685–695 (EHYPMTDAFDA). A helical transmembrane segment spans residues 696–719 (MLQAGNIVFTVFFTMEMAFKIIAF). At 720 to 727 (DPYYYFQK) the chain is on the cytoplasmic side. The chain crosses the membrane as a helical span at residues 728–747 (KWNVFDCVIVTVSLLELSIA). Over 748–753 (KKGSLS) the chain is Extracellular. The chain crosses the membrane as a helical; Voltage-sensor span at residues 754-773 (VLRTFRLLRVFKLAKSWPTL). At 774–789 (NTLIKIIGNSVGALGN) the chain is on the cytoplasmic side. Residues 790-810 (LTFILAIIVFIFALVGKQLLG) form a helical membrane-spanning segment. Residues 811 to 834 (EDYGCRKDGTALWNEGQLRWHMCD) lie on the Extracellular side of the membrane. An intramembrane region (pore-forming) is located at residues 835–855 (FFHSFLVIFRILCGEWIENMW). The Extracellular portion of the chain corresponds to 856–864 (VCMQVSEKS). Cys-857 and Cys-866 are oxidised to a cystine. A helical membrane pass occupies residues 865–890 (ICLILFLTVMVLGNLVVLNLFIALLL). Residues 891–1149 (NSFSADNLTA…GWQVRKTCYR (259 aa)) are Cytoplasmic-facing. A compositionally biased stretch (acidic residues) spans 1004 to 1016 (GESDLDELEEDIE). Disordered stretches follow at residues 1004-1034 (GESD…QQDQ) and 1071-1097 (ATPQ…PDPE). An III repeat occupies 1142-1451 (QVRKTCYRIV…KKYYNAMKKL (310 aa)). Residues 1150 to 1173 (IVEHSWFESFIIFMILLSSGALAF) traverse the membrane as a helical segment. Residues 1174-1186 (EDNYLEQKPRVKS) lie on the Extracellular side of the membrane. The helical transmembrane segment at 1187-1212 (MLEYTDRVFTFIFVFEMLLKWVAYGF) threads the bilayer. Topologically, residues 1213–1218 (KKYFTN) are cytoplasmic. A helical transmembrane segment spans residues 1219 to 1240 (AWCWLDFLIVNISLTSLIAKIL). Residues 1241-1244 (DYSD) are Extracellular-facing. A helical; Voltage-sensor membrane pass occupies residues 1245–1266 (VASLKALRTLRALRPLRALSRF). The Cytoplasmic segment spans residues 1267–1285 (EGMRVVVDALVGAIPSIMN). Residues 1286–1313 (VLLVCLIFWLIFSIMGVNLFAGKFSRCI) traverse the membrane as a helical segment. Residues 1314–1355 (DTSNNPFSVVNSTIVNNKSECRNQNHTGHFFWVNVKVNFDNV) lie on the Extracellular side of the membrane. Positions 1356–1377 (AMGYLALLQVATFKGWMDIMYA) form an intramembrane region, pore-forming. At 1378-1393 (AVDSREINSQPQWEDN) the chain is on the extracellular side. The chain crosses the membrane as a helical span at residues 1394-1420 (LYMYLYFVVFIIFGGFFTLNLFVGVII). Residues 1421–1473 (DNFNQQKKKLGGQDIFMTEEQKKYYNAMKKLGSKKPQKPIPRPLNKYQGFVFD) are Cytoplasmic-facing. At Ser-1453 the chain carries Phosphoserine; by PKC. The IV repeat unit spans residues 1460–1759 (IPRPLNKYQG…WEKFDPEATQ (300 aa)). The helical transmembrane segment at 1474–1497 (IVTRQAFDIIIMVLICLNMITMMV) threads the bilayer. Residues 1498 to 1508 (ETDGQSEEKTK) lie on the Extracellular side of the membrane. A helical membrane pass occupies residues 1509–1532 (ILGRINQFFVAVFTGECVMKMFAL). Residues 1533-1538 (RQYYFT) are Cytoplasmic-facing. Residues 1539–1562 (NGWNVFDFIVVILSIGSLVFSAIL) form a helical membrane-spanning segment. Residues 1563-1574 (KSLESYFSPTLF) are Extracellular-facing. A helical; Voltage-sensor membrane pass occupies residues 1575 to 1596 (RVIRLARIGRILRLIRAAKGIR). Over 1597–1611 (TLLFALMMSLPALFN) the chain is Cytoplasmic. A helical transmembrane segment spans residues 1612–1634 (IGLLLFLVMFIYSIFGMASFANV). The Extracellular segment spans residues 1635–1648 (VEEAGIDDMFNFQT). The segment at residues 1649–1671 (FGNSMLCLFQITTSAGWDGLLSP) is an intramembrane region (pore-forming). Residues 1672-1699 (ILNTGPPYCDPNLSNNNTSKGNCGSPTV) are Extracellular-facing. Residues 1700 to 1724 (GIVFFTTYIIISFLIVVNMYIAVIL) traverse the membrane as a helical segment. Residues 1725–1959 (ENFNVATEES…SKEGDSPGPQ (235 aa)) are Cytoplasmic-facing. The IQ domain maps to 1853 to 1882 (EDISATVIQKAYRSYVLQRSLTLSNPLRVP). Positions 1901–1959 (ANDSGRLPDKSETTSATSFPPSYDSVTRGLSDRVNISTSNSMHNEDEVTSKEGDSPGPQ) are disordered. Positions 1943 to 1959 (HNEDEVTSKEGDSPGPQ) are enriched in basic and acidic residues.

Belongs to the sodium channel (TC 1.A.1.10) family. Nav1.8/SCN10A subfamily. As to quaternary structure, the channel consists of an ion conducting pore forming alpha-subunit regulated by one or more associated auxiliary subunits SCN1B, SCN2B and SCN3B; electrophysiological properties may vary depending on the type of the associated beta subunits. Found in a number of complexes with PRX, DYNLT1 and PDZD2. Interacts with proteins such as FSTL1, PRX, DYNLT1, PDZD2, S100A10 and many others. Interacts with NEDD4 and NEDD4L. Ubiquitinated by NEDD4L; which promotes its endocytosis. Post-translationally, phosphorylation at Ser-1453 by PKC in a highly conserved cytoplasmic loop slows inactivation of the sodium channel and reduces peak sodium currents. In terms of processing, lacks the cysteine which covalently binds the conotoxin GVIIJ. This cysteine (position 816) is speculated in other sodium channel subunits alpha to be implied in covalent binding with the sodium channel subunit beta-2 or beta-4.

It localises to the cell membrane. The enzyme catalyses Na(+)(in) = Na(+)(out). Its function is as follows. Tetrodotoxin-resistant channel that mediates the voltage-dependent sodium ion permeability of excitable membranes. Assuming opened or closed conformations in response to the voltage difference across the membrane, the protein forms a sodium-selective channel through which sodium ions may pass in accordance with their electrochemical gradient. Plays a role in neuropathic pain mechanisms. This is Sodium channel protein type 10 subunit alpha (Scn10a) from Onychomys torridus (Southern grasshopper mouse).